We begin with the raw amino-acid sequence, 806 residues long: Volume-regulated anion channel subunit LRRC8E (806 aa).

The Cytoplasmic segment spans residues 1 to 22 (MIPVAEFKQFTEQQPAFKVLKP). A helical transmembrane segment spans residues 23–43 (WWDVLAEYITYAMLMIGVFGC). Topologically, residues 44–130 (TLQVTQDKII…YETALHWYAK (87 aa)) are extracellular. A disulfide bridge links Cys54 with Cys311. N-linked (GlcNAc...) asparagine glycans are attached at residues Asn57 and Asn80. Polar residues predominate over residues 72-81 (YDQQSPPSND). Residues 72 to 103 (YDQQSPPSNDSDLETTIPPPTATSSPPREMSG) form a disordered region. The chain crosses the membrane as a helical span at residues 131-151 (YFPYLVVIHTLIFIICGNFWF). Topologically, residues 152–275 (KFPGTSSKIE…MRQTVLKVCK (124 aa)) are cytoplasmic. Residues 182–213 (EVSGESSQEKPSQERSIDRELSKPNFEEGSPA) form a disordered region. The span at 188–207 (SQEKPSQERSIDRELSKPNF) shows a compositional bias: basic and acidic residues. The chain crosses the membrane as a helical span at residues 276–296 (FVLITIYNAVLVGKIHFIVPC). Topologically, residues 297-323 (SVHTEDMTGYNSFCCNHTKAHLFSKLA) are extracellular. Residue Asn312 is glycosylated (N-linked (GlcNAc...) asparagine). The chain crosses the membrane as a helical span at residues 324–344 (ITYLCFLGVYGLTCLYTLYWL). The Cytoplasmic portion of the chain corresponds to 345–806 (FRRPLKEYSF…VEVRDKLKED (462 aa)). 10 LRR repeats span residues 544 to 566 (LKSLKVLTIKSNLSKIPATVADV), 569 to 589 (HLQKFSIHNDGTKLLTLNALK), 593 to 614 (LVKELELVRCELERIPHAVFSL), 616 to 637 (NLQVLDLKENTLHTIEEIISLQ), 641 to 662 (KLSVLRLWHNQIAYIPEHIRKL), 664 to 685 (GLEELSLNRNKILVIPSQLFLC), 687 to 708 (KLRHLDLSNNEIRELPPEIGVL), 710 to 731 (LLQYLGLSGNFLEDLPNELFFC), 733 to 754 (KLKTLKLGQNRLGNLSPKVGSL), and 756 to 777 (CLVKLELKGNRMDTLPPELGNC).

It belongs to the LRRC8 family. As to quaternary structure, heterohexamer; oligomerizes with other LRRC8 proteins (lrrc8a, lrrc8c, lrrc8d and/or lrrc8b) to form a heterohexamer. Detected in a channel complex that contains lrrc8a, lrrc8c and lrrc8e. In vivo, the subunit composition may depend primarily on expression levels, and heterooligomeric channels containing various proportions of the different LRRC8 proteins may coexist.

The protein resides in the cell membrane. It localises to the endoplasmic reticulum membrane. The protein localises to the lysosome membrane. It carries out the reaction chloride(in) = chloride(out). It catalyses the reaction iodide(out) = iodide(in). The catalysed reaction is taurine(out) = taurine(in). The enzyme catalyses 2',3'-cGAMP(out) = 2',3'-cGAMP(in). Its function is as follows. Non-essential component of the volume-regulated anion channel (VRAC, also named VSOAC channel), an anion channel required to maintain a constant cell volume in response to extracellular or intracellular osmotic changes. The VRAC channel conducts iodide better than chloride and can also conduct organic osmolytes like taurine. Mediates efflux of amino acids, such as aspartate, in response to osmotic stress. The VRAC channel also mediates transport of immunoreactive cyclic dinucleotide GMP-AMP (2'-3'-cGAMP), an immune messenger produced in response to DNA virus in the cytosol. Channel activity requires lrrc8a plus at least one other family member (lrrc8b, lrrc8c, lrrc8d or lrrc8e); channel characteristics depend on the precise subunit composition. Also plays a role in lysosome homeostasis by forming functional lysosomal VRAC channels in response to low cytoplasmic ionic strength condition: lysosomal VRAC channels are necessary for the formation of large lysosome-derived vacuoles, which store and then expel excess water to maintain cytosolic water homeostasis. This is Volume-regulated anion channel subunit LRRC8E from Xenopus tropicalis (Western clawed frog).